Here is a 495-residue protein sequence, read N- to C-terminus: UDP-glycosyltransferase 73C10 (495 aa).

Residue histidine 24 is the Proton acceptor of the active site. Residue histidine 24 participates in an anthocyanidin binding. The active-site Charge relay is aspartate 129. UDP-alpha-D-glucose is bound by residues glutamine 358, histidine 373, tryptophan 376, asparagine 377, serine 378, and glutamate 381. Glycine 396 lines the an anthocyanidin pocket. UDP-alpha-D-glucose-binding residues include aspartate 397 and glutamine 398.

This sequence belongs to the UDP-glycosyltransferase family.

The enzyme catalyses oleanolate + UDP-alpha-D-glucose = oleanolate 3-O-beta-D-glucoside + UDP + H(+). Its function is as follows. Catalyzes the transfer of a glucose (Glc) moiety from UDP-Glc to the C-3 position of the oleanane sapogenins oleanolate and hederagenin, and to the C-28 carboxylic group of the lupane sapogenin betulinate. The monoglucosylated hederagenin 3-O-beta-D-glucoside is a feeding deterrent of the yellow-striped flea beetle (Phyllotreta nemorum). The polypeptide is UDP-glycosyltransferase 73C10 (Barbarea vulgaris (Yellow rocket)).